A 234-amino-acid polypeptide reads, in one-letter code: uncharacterized protein (234 aa).

Transmembrane regions (helical) follow at residues 20-40 (LILL…FKVI) and 176-196 (VMAF…LHFL).

Belongs to the CpsC/CapA family.

The protein resides in the cell membrane. This is an uncharacterized protein from Bacillus subtilis (strain 168).